A 269-amino-acid chain; its full sequence is MPPAHKRDTNVRNLSAPYNIPSQSARVAAGNAAINRRRSSPVENSPGNGFPVSEDATDYPSGTTSENESLPLNRAPRSLREVASELAQEETLPVETSDLNIDVESEVFDLEDINFQNDADDINQRFTYNNHPASVENSLTNVNSIHAQPTTISDMIDLTDETSYDPRKQKFEQGKNPSTTNAEIEKEEPSKKQVVPSSQRLADYKCVICLDSPENLSCTPCGHIFCNFCILSALGTTAATQKCPVCRRKVHPNKVICLEMMLGSQKKKS.

The segment covering methionine 1–asparagine 10 has biased composition (basic and acidic residues). Disordered stretches follow at residues methionine 1 to alanine 75 and proline 166 to proline 196. Residues proline 60–leucine 70 are compositionally biased toward polar residues. The segment at cysteine 206–arginine 247 adopts an RING-type zinc-finger fold.

In terms of assembly, part of an E3 ubiquitin complex including rfp1, rfp2 and slx8. Interacts with rfp1 and rfp2.

It is found in the nucleus. It carries out the reaction S-ubiquitinyl-[E2 ubiquitin-conjugating enzyme]-L-cysteine + [acceptor protein]-L-lysine = [E2 ubiquitin-conjugating enzyme]-L-cysteine + N(6)-ubiquitinyl-[acceptor protein]-L-lysine.. It participates in protein modification; protein ubiquitination. Mediates ubiquitination and subsequent desumoylation/degradation of sumoylated proteins and proteins containing SUMO-like domains. Acts as a critical suppressor of gross chromosomal rearrangements (GCRs) during normal cell cycle progression. Involved in stabilizing, restarting or resolving transiently stalled replication forks. Prevents accumulation of DNA damage during cell cycle progression. This Schizosaccharomyces pombe (strain 972 / ATCC 24843) (Fission yeast) protein is E3 ubiquitin-protein ligase complex slx8-rfp subunit slx8 (slx8).